Reading from the N-terminus, the 365-residue chain is Mitogen-activated protein kinase 13 (365 aa).

Positions 25–308 constitute a Protein kinase domain; sequence YVSPTHVGSG…AAQALTHPFF (284 aa). An ATP-binding site is contributed by 31-39; that stretch reads VGSGAYGSV. Position 47 is a phosphoserine (Ser-47). Lys-54 lines the ATP pocket. Asp-150 functions as the Proton acceptor in the catalytic mechanism. Phosphothreonine; by MAP2K3, MAP2K4, MAP2K6 and MAP2K7 is present on Thr-180. A TXY motif is present at residues 180–182; sequence TGY. A Phosphotyrosine; by MAP2K3, MAP2K4, MAP2K6 and MAP2K7 modification is found at Tyr-182. Ser-350 is subject to Phosphoserine.

This sequence belongs to the protein kinase superfamily. CMGC Ser/Thr protein kinase family. MAP kinase subfamily. Interacts with MAPK8IP2. Mg(2+) serves as cofactor. Dually phosphorylated on Thr-180 and Tyr-182 by MAP2K3/MKK3, MAP2K4/MKK4, MAP2K6/MKK6 and MAP2K7/MKK7, which activates the enzyme. Dephosphorylated by dual specificity phosphatase DUSP1.

The enzyme catalyses L-seryl-[protein] + ATP = O-phospho-L-seryl-[protein] + ADP + H(+). It carries out the reaction L-threonyl-[protein] + ATP = O-phospho-L-threonyl-[protein] + ADP + H(+). Its activity is regulated as follows. Activated by phosphorylation on threonine and tyrosine by dual specificity kinases, MAP2K3/MKK3, MAP2K6/MKK6, MAP2K4/MKK4 and MAP2K7/MKK7. Activation by ultraviolet radiation, hyperosmotic shock, anisomycin or by TNF-alpha is mediated by MAP2K3/MKK3. Inhibited by dual specificity phosphatase DUSP1. Its function is as follows. Serine/threonine kinase which acts as an essential component of the MAP kinase signal transduction pathway. MAPK13 is one of the four p38 MAPKs which play an important role in the cascades of cellular responses evoked by extracellular stimuli such as pro-inflammatory cytokines or physical stress leading to direct activation of transcription factors such as ELK1 and ATF2. Accordingly, p38 MAPKs phosphorylate a broad range of proteins and it has been estimated that they may have approximately 200 to 300 substrates each. MAPK13 is one of the less studied p38 MAPK isoforms. Some of the targets are downstream kinases such as MAPKAPK2, which are activated through phosphorylation and further phosphorylate additional targets. Plays a role in the regulation of protein translation by phosphorylating and inactivating EEF2K. Involved in cytoskeletal remodeling through phosphorylation of MAPT and STMN1. Mediates UV irradiation induced up-regulation of the gene expression of CXCL14. Plays an important role in the regulation of epidermal keratinocyte differentiation, apoptosis and skin tumor development. Phosphorylates the transcriptional activator MYB in response to stress which leads to rapid MYB degradation via a proteasome-dependent pathway. MAPK13 also phosphorylates and down-regulates PRKD1 during regulation of insulin secretion in pancreatic beta cells. This Pan troglodytes (Chimpanzee) protein is Mitogen-activated protein kinase 13 (MAPK13).